Reading from the N-terminus, the 162-residue chain is Urease subunit beta (162 aa).

Residues 116 to 162 form a disordered region; sequence WRRSSAAGDAPQELPQVEAAERGRKLDDATDVDTNVGTEEGFEEGRN. Basic and acidic residues predominate over residues 134 to 143; sequence AAERGRKLDD.

Belongs to the urease beta subunit family. In terms of assembly, heterotrimer of UreA (gamma), UreB (beta) and UreC (alpha) subunits. Three heterotrimers associate to form the active enzyme.

Its subcellular location is the cytoplasm. The enzyme catalyses urea + 2 H2O + H(+) = hydrogencarbonate + 2 NH4(+). Its pathway is nitrogen metabolism; urea degradation; CO(2) and NH(3) from urea (urease route): step 1/1. In Corynebacterium glutamicum (strain ATCC 13032 / DSM 20300 / JCM 1318 / BCRC 11384 / CCUG 27702 / LMG 3730 / NBRC 12168 / NCIMB 10025 / NRRL B-2784 / 534), this protein is Urease subunit beta.